The following is a 937-amino-acid chain: Protocadherin alpha-7 (937 aa).

Residues 1 to 29 (MVNLRGYNWKSQQLLLFLIIVAAWEAGSG) form the signal peptide. Over 30 to 697 (QLHYSVPEEA…RVDQRLVDVN (668 aa)) the chain is Extracellular. 6 Cadherin domains span residues 34-133 (SVPE…PPMF), 157-242 (ASDA…APVF), 243-350 (DRSL…APQL), 351-455 (TVSS…APLF), 456-565 (AQPE…APTL), and 587-682 (PGQV…SSKV). A disulfide bridge connects residues Cys-96 and Cys-102. O-linked (Man) threonine glycosylation is found at Thr-223 and Thr-225. Asn-257 and Asn-265 each carry an N-linked (GlcNAc...) asparagine glycan. A glycan (O-linked (Man) threonine) is linked at Thr-438. O-linked (Man) serine glycosylation occurs at Ser-478. An N-linked (GlcNAc...) asparagine glycan is attached at Asn-548. The chain crosses the membrane as a helical span at residues 698 to 718 (VYLIIAICAVSSLLVLTLLLY). Residues 719-937 (TALRCSATPT…GNSTTDNSDQ (219 aa)) lie on the Cytoplasmic side of the membrane. Disordered stretches follow at residues 755–794 (RQRV…PDWR) and 816–843 (RAGP…EVSP). PXXP repeat units lie at residues 774–777 (PSLP), 786–789 (PRQP), 819–822 (PGGP), 860–863 (PGNP), and 878–881 (PGSP). The tract at residues 774–881 (PSLPQGPSST…PDKFIIPGSP (108 aa)) is 5 X 4 AA repeats of P-X-X-P. Polar residues predominate over residues 775 to 787 (SLPQGPSSTDNPR). Residues 887–937 (RQEPANNQIDKSDFITFGKKEETKKKKKKKKGNKTQEKKEKGNSTTDNSDQ) form a disordered region. Residues 896-910 (DKSDFITFGKKEETK) show a composition bias toward basic and acidic residues.

Forms homodimers in trans (molecules expressed by two different cells). Forms promiscuous heterodimers in cis (at the plasma membrane of the same cell) with other protocadherins.

Its subcellular location is the cell membrane. In terms of biological role, calcium-dependent cell-adhesion protein involved in cells self-recognition and non-self discrimination. Thereby, it is involved in the establishment and maintenance of specific neuronal connections in the brain. The chain is Protocadherin alpha-7 from Mus musculus (Mouse).